Here is a 404-residue protein sequence, read N- to C-terminus: Cysteine desulfurase IscS (404 aa).

Pyridoxal 5'-phosphate contacts are provided by residues 75–76 (AT), Asn155, Gln183, and 203–205 (SSH). An N6-(pyridoxal phosphate)lysine modification is found at Lys206. A pyridoxal 5'-phosphate-binding site is contributed by Thr243. Cys328 functions as the Cysteine persulfide intermediate in the catalytic mechanism. Cys328 provides a ligand contact to [2Fe-2S] cluster.

Belongs to the class-V pyridoxal-phosphate-dependent aminotransferase family. NifS/IscS subfamily. Homodimer. Forms a heterotetramer with IscU, interacts with other sulfur acceptors. Pyridoxal 5'-phosphate is required as a cofactor.

It localises to the cytoplasm. It carries out the reaction (sulfur carrier)-H + L-cysteine = (sulfur carrier)-SH + L-alanine. It participates in cofactor biosynthesis; iron-sulfur cluster biosynthesis. Master enzyme that delivers sulfur to a number of partners involved in Fe-S cluster assembly, tRNA modification or cofactor biosynthesis. Catalyzes the removal of elemental sulfur atoms from cysteine to produce alanine. Functions as a sulfur delivery protein for Fe-S cluster synthesis onto IscU, an Fe-S scaffold assembly protein, as well as other S acceptor proteins. This Haemophilus influenzae (strain PittGG) protein is Cysteine desulfurase IscS.